We begin with the raw amino-acid sequence, 452 residues long: AP-4 complex subunit mu-1 (452 aa).

Residues 184-451 (KNEVFLDVVE…LSHSDAYVIR (268 aa)) enclose the MHD domain.

It belongs to the adaptor complexes medium subunit family. As to quaternary structure, adaptor protein complex 4 (AP-4) is a heterotetramer composed of two large adaptins (epsilon-type subunit AP4E1 and beta-type subunit AP4B1), a medium adaptin (mu-type subunit AP4M1) and a small adaptin (sigma-type AP4S1). Interacts with tyrosine-based sorting signals on the cytoplasmic tail of cargo proteins such as APP, ATG9A, LAMP2 and NAGPA. Interacts with the C-terminal domain of GRID2. Interacts with GRIA1 and GRIA2; the interaction is indirect via CACNG3. Interacts with CACNG3; CACNG3 associates GRIA1 and GRIA2 with the adaptor protein complex 4 (AP-4) to target them to the somatodendritic compartment of neurons. Interacts with HOOK1 and HOOK2; the interactions are direct, mediate the interaction between FTS-Hook-FHIP (FHF) complex and AP-4 and the perinuclear distribution of AP-4.

It is found in the golgi apparatus. The protein localises to the trans-Golgi network membrane. It localises to the early endosome. Component of the adaptor protein complex 4 (AP-4). Adaptor protein complexes are vesicle coat components involved both in vesicle formation and cargo selection. They control the vesicular transport of proteins in different trafficking pathways. AP-4 forms a non clathrin-associated coat on vesicles departing the trans-Golgi network (TGN) and may be involved in the targeting of proteins from the trans-Golgi network (TGN) to the endosomal-lysosomal system. It is also involved in protein sorting to the basolateral membrane in epithelial cells and the proper asymmetric localization of somatodendritic proteins in neurons. Within AP-4, the mu-type subunit AP4M1 is directly involved in the recognition and binding of tyrosine-based sorting signals found in the cytoplasmic part of cargos. The adaptor protein complex 4 (AP-4) may also recognize other types of sorting signal. The chain is AP-4 complex subunit mu-1 from Canis lupus familiaris (Dog).